A 567-amino-acid polypeptide reads, in one-letter code: DNA ligase B (567 aa).

Lys-132 (N6-AMP-lysine intermediate) is an active-site residue.

Belongs to the NAD-dependent DNA ligase family. LigB subfamily.

The catalysed reaction is NAD(+) + (deoxyribonucleotide)n-3'-hydroxyl + 5'-phospho-(deoxyribonucleotide)m = (deoxyribonucleotide)n+m + AMP + beta-nicotinamide D-nucleotide.. Catalyzes the formation of phosphodiester linkages between 5'-phosphoryl and 3'-hydroxyl groups in double-stranded DNA using NAD as a coenzyme and as the energy source for the reaction. The chain is DNA ligase B from Yersinia pestis.